A 535-amino-acid chain; its full sequence is Cytochrome c oxidase subunit 1 (535 aa).

Residues 15–37 (IAILYFIFSTFCGLAGTAMSFII) traverse the membrane as a helical segment. Positions 40, 43, and 45 each coordinate Ca(2+). Helical transmembrane passes span 58–80 (VLVT…IGGF), 147–169 (LAIF…FIVT), 190–212 (ILIT…TMLL), 238–260 (WFFG…SHIV), and 267–289 (PVFG…FLVW). His-63 serves as a coordination point for Fe(II)-heme a. His-242 contacts Cu cation. Positions 242–246 (HPEVY) form a cross-link, 1'-histidyl-3'-tyrosine (His-Tyr). An O2-binding site is contributed by Tyr-246. The Cu cation site is built by His-291 and His-292. Helical transmembrane passes span 304-326 (AYFT…SWLT) and 339-361 (MLYT…VLAN). Positions 369 and 370 each coordinate Mg(2+). 2 helical membrane-spanning segments follow: residues 376 to 398 (THFH…YYWS) and 415 to 437 (FWLI…INGM). His-377 is a binding site for heme a3. His-379 serves as a coordination point for Fe(II)-heme a. Position 442 (Pro-442) interacts with Ca(2+). Residues 452 to 474 (NLVSSFGSMMTIMSLMLFTYIIY) form a helical membrane-spanning segment.

The protein belongs to the heme-copper respiratory oxidase family. Component of the cytochrome c oxidase (complex IV, CIV), a multisubunit enzyme composed of a catalytic core of 3 subunits and several supernumerary subunits. The complex exists as a monomer or a dimer and forms supercomplexes (SCs) in the inner mitochondrial membrane with ubiquinol-cytochrome c oxidoreductase (cytochrome b-c1 complex, complex III, CIII). Heme is required as a cofactor. It depends on Cu cation as a cofactor.

The protein localises to the mitochondrion inner membrane. The enzyme catalyses 4 Fe(II)-[cytochrome c] + O2 + 8 H(+)(in) = 4 Fe(III)-[cytochrome c] + 2 H2O + 4 H(+)(out). The protein operates within energy metabolism; oxidative phosphorylation. In terms of biological role, component of the cytochrome c oxidase, the last enzyme in the mitochondrial electron transport chain which drives oxidative phosphorylation. The respiratory chain contains 3 multisubunit complexes succinate dehydrogenase (complex II, CII), ubiquinol-cytochrome c oxidoreductase (cytochrome b-c1 complex, complex III, CIII) and cytochrome c oxidase (complex IV, CIV), that cooperate to transfer electrons derived from NADH and succinate to molecular oxygen, creating an electrochemical gradient over the inner membrane that drives transmembrane transport and the ATP synthase. Cytochrome c oxidase is the component of the respiratory chain that catalyzes the reduction of oxygen to water. Electrons originating from reduced cytochrome c in the intermembrane space (IMS) are transferred via the dinuclear copper A center (CU(A)) of subunit 2 and heme A of subunit 1 to the active site in subunit 1, a binuclear center (BNC) formed by heme A3 and copper B (CU(B)). The BNC reduces molecular oxygen to 2 water molecules using 4 electrons from cytochrome c in the IMS and 4 protons from the mitochondrial matrix. The chain is Cytochrome c oxidase subunit 1 (COX1) from Eremothecium gossypii (strain ATCC 10895 / CBS 109.51 / FGSC 9923 / NRRL Y-1056) (Yeast).